A 358-amino-acid chain; its full sequence is Spermatogenesis-associated protein 22 (358 aa).

4 stretches are compositionally biased toward polar residues: residues 1 to 12 (MKRNLNESSARS), 30 to 51 (QPLT…DSYG), 81 to 121 (PASA…TSLR), and 150 to 159 (QQQKQFQTPE). 3 disordered regions span residues 1-51 (MKRN…DSYG), 81-122 (PASA…SLRT), and 150-172 (QQQK…AEVP).

In terms of assembly, component of a multiprotein complex with MEIOB and RPA2. Interacts with MEIOB. Interacts with the complex BRME1:HSF2BP:BRCA2. Specifically expressed in gonadal germ cells, when male and female germ cells progress through prophase of meiosis I.

Its subcellular location is the chromosome. In terms of biological role, meiosis-specific protein required for homologous recombination in meiosis I. The chain is Spermatogenesis-associated protein 22 from Mus musculus (Mouse).